We begin with the raw amino-acid sequence, 715 residues long: Phosphatidylinositol 4-phosphate 5-kinase 6 (715 aa).

The span at 1–13 (MSVAHADDADDYS) shows a compositional bias: basic and acidic residues. The segment at 1 to 21 (MSVAHADDADDYSRPTGESYH) is disordered. MORN repeat units lie at residues 32–54 (YTGQ…DGCM), 55–77 (YVGD…SGAT), 78–100 (YEGD…SGDL), 101–123 (YRGS…NGDC), 124–146 (YDGE…NENH), 147–169 (YIGQ…NGNR), 170–192 (YDGS…DGSF), and 193–214 (YVGV…STSS). Positions 253–306 (GASEQSSSGNRTKNSERPRRRSVDGRVSNGEMELRSNGSGYLQVDDNAESTRSS) are disordered. Over residues 255-264 (SEQSSSGNRT) the composition is skewed to polar residues. Residues 265–276 (KNSERPRRRSVD) show a composition bias toward basic and acidic residues. In terms of domain architecture, PIPK spans 321 to 711 (TISKGHKNYE…RFRDFIFRVF (391 aa)). An activation loop region spans residues 671-692 (YDISKKLEHAYKSMQYDPTSIS).

It carries out the reaction a 1,2-diacyl-sn-glycero-3-phospho-(1D-myo-inositol 4-phosphate) + ATP = a 1,2-diacyl-sn-glycero-3-phospho-(1D-myo-inositol-4,5-bisphosphate) + ADP + H(+). The protein is Phosphatidylinositol 4-phosphate 5-kinase 6 (PIP5K6) of Arabidopsis thaliana (Mouse-ear cress).